A 20-amino-acid chain; its full sequence is Cytolysin tenebrosin-A (20 aa).

Residues 3–12 (AVAGAVIEGA) form a plays an important role in the hemolytic activity region. An N-terminal region region spans residues 11–20 (GATLTFEVLQ).

The protein belongs to the actinoporin family. Sea anemone subfamily. As to quaternary structure, octamer or nonamer in membranes. Monomer in the soluble state.

It is found in the secreted. It localises to the nematocyst. Its subcellular location is the target cell membrane. Functionally, pore-forming protein that forms cations-selective hydrophilic pores of around 1 nm and causes cardiac stimulation and cytolysis. Pore formation is a multi-step process that involves specific recognition of membrane sphingomyelin (but neither cholesterol nor phosphatidylcholine) using aromatic rich region and adjacent phosphocholine (POC) binding site, firm binding to the membrane (mainly driven by hydrophobic interactions) accompanied by the transfer of the N-terminal region to the lipid-water interface and finally pore formation after oligomerization of monomers. The protein is Cytolysin tenebrosin-A of Actinia tenebrosa (Australian red waratah sea anemone).